The chain runs to 172 residues: MKSTILVTGYKNFELGIFQDKDPRITIIKKAIDKDFRRFLENGADWFIFMGNLGFEYWALEVALDLQKEYDFQIATIFTFENHGQNWNEANKAKLALFKQVDFVKYTFPSYENPGQFKQYNHFLINNTQGAYLFYDSENETNLKFLLEMMEKKEAYDISFLTFDRLNEIYEE.

Belongs to the UPF0398 family.

This is UPF0398 protein gbs0290 from Streptococcus agalactiae serotype III (strain NEM316).